We begin with the raw amino-acid sequence, 22 residues long: Alpha-amylase inhibitor DR4 (22 aa).

The segment at 1-22 is disordered; the sequence is SGGGKEAAETFNRVESHPRPDA.

Its function is as follows. Inhibits insect alpha-amylases. This is Alpha-amylase inhibitor DR4 from Delonix regia (Royal poinciana).